A 303-amino-acid polypeptide reads, in one-letter code: Ferrochelatase (303 aa).

Fe cation is bound by residues histidine 185 and glutamate 262.

Belongs to the ferrochelatase family.

It is found in the cytoplasm. It catalyses the reaction heme b + 2 H(+) = protoporphyrin IX + Fe(2+). It functions in the pathway porphyrin-containing compound metabolism; protoheme biosynthesis; protoheme from protoporphyrin-IX: step 1/1. Functionally, catalyzes the ferrous insertion into protoporphyrin IX. The protein is Ferrochelatase of Campylobacter jejuni subsp. doylei (strain ATCC BAA-1458 / RM4099 / 269.97).